The primary structure comprises 384 residues: Urea transporter 1 (384 aa).

The segment at 1 to 23 is disordered; the sequence is MDDNPTAVKLDQGGNQAPQGQGR. 5 helical membrane-spanning segments follow: residues 61–81, 85–105, 111–131, 138–158, and 168–188; these read ISQVVFVSNPISGILILVGLL, PWCALNGCVGTVVSTLTALLL, AITAGLQGYNATLVGILMAIY, FWWLLFPVSAMSMTCPIFSSA, and LPVFTLPFNMALSMYLSATGH. Residue asparagine 206 is glycosylated (N-linked (GlcNAc...) asparagine). Transmembrane regions (helical) follow at residues 237–257, 279–299, and 327–347; these read GGIFLGAILLSSPLMCLHAAI, GLWGFNSSLACIAIGGMFMAL, and VVGLPSCTWPFCLATLLFLLL.

This sequence belongs to the urea transporter family. Homotrimer; each subunit contains a pore through which urea permeates. Identified in a complex with STOM.

It is found in the cell membrane. The protein localises to the basolateral cell membrane. It carries out the reaction urea(in) = urea(out). Functionally, mediates the transport of urea driven by a concentration gradient across the cell membranes of erythrocytes and the renal inner medullary collecting duct which is critical to the urinary concentrating mechanism. Facilitates water transport in erythrocytes. This Capra hircus (Goat) protein is Urea transporter 1 (SLC14A1).